The primary structure comprises 386 residues: Short integuments 2, mitochondrial (386 aa).

The CP-type G domain occupies 37–207 (TRAIRNRLKL…VLDSPGVLVP (171 aa)). Residues 55 to 59 (DARIP) carry the DARXP motif motif. A G4 region spans residues 81–84 (NKKD). Residues 81 to 84 (NKKD), 109 to 110 (NA), and 146 to 151 (NVGKSA) contribute to the GTP site. Positions 109–111 (NAH) are G5. A G1 region spans residues 143-150 (GVPNVGKS). The interval 180–184 (GVTQD) is G2. Residues 200-203 (DSPG) form a G3 region. Glycine 203 serves as a coordination point for GTP.

This sequence belongs to the TRAFAC class YlqF/YawG GTPase family. MTG1 subfamily. Expressed in seedlings, roots, leaves, stems, inflorescences and siliques.

The protein resides in the mitochondrion. Functionally, GTPase that may function in mitochondrial ribosome assembly. Involved in a variety of growth processes during vegetative development and promotes growth and cell division in the developing integuments. The chain is Short integuments 2, mitochondrial from Arabidopsis thaliana (Mouse-ear cress).